The following is a 187-amino-acid chain: UPF0301 protein PMI0339 (187 aa).

Belongs to the UPF0301 (AlgH) family.

In Proteus mirabilis (strain HI4320), this protein is UPF0301 protein PMI0339.